The following is a 515-amino-acid chain: Cytosolic Fe-S cluster assembly factor NAR1 homolog (515 aa).

[4Fe-4S] cluster-binding residues include Cys19, Cys65, Cys68, Cys71, Cys192, Cys247, Cys428, and Cys432.

This sequence belongs to the NARF family.

Functionally, component of the cytosolic Fe/S protein assembly machinery. Required for maturation of extramitochondrial Fe/S proteins. May play a role in the transfer of pre-assembled Fe/S clusters to target apoproteins. The polypeptide is Cytosolic Fe-S cluster assembly factor NAR1 homolog (Schizosaccharomyces japonicus (strain yFS275 / FY16936) (Fission yeast)).